Reading from the N-terminus, the 200-residue chain is MFRKGKKRHSSSSSQSSEISTKSKSVDSSLGGLSRSSTVASLDTDSTKSSGQSNNNSDTCAEFRIKYVGAIEKLKLSEGKSLEGPLDLINYIDVAQQDGKLPFVPLEEEFIMGVSKYGIKVSTSDQYDVLHRHALYLIIRMVCYDDGLGSGKSLLALKTTDANNQEYSLWVYQCNSLEQAQAICKVLSTAFDSVLTSEKP.

The segment covering 1 to 10 has biased composition (basic residues); sequence MFRKGKKRHS. The disordered stretch occupies residues 1–56; it reads MFRKGKKRHSSSSSQSSEISTKSKSVDSSLGGLSRSSTVASLDTDSTKSSGQSNNN. The Nuclear localization signal signature appears at 6–7; it reads KK. Residues 11 to 29 are compositionally biased toward low complexity; that stretch reads SSSSQSSEISTKSKSVDSS. The span at 34-56 shows a compositional bias: polar residues; that stretch reads SRSSTVASLDTDSTKSSGQSNNN. T38 is subject to Phosphothreonine; by CaMK2. S41 bears the Phosphoserine mark. Residues 58–200 form the PID domain; sequence DTCAEFRIKY…FDSVLTSEKP (143 aa). Residues 136–139 form an interaction with KRIT1 region; sequence YLII. An interaction with ITGB1 region spans residues 139-141; the sequence is IRM.

In terms of assembly, interacts (via N-terminus and PTB domain) with ROCK1. Found in a complex, at least composed of ITGB1BP1, KRIT1 and RAP1A. Interacts (via C-terminal region) with ITGB1 (via C-terminal cytoplasmic tail); the interaction prevents talin TLN1 binding to ITGB1 and KRIT1 and ITGB1 compete for the same binding site. Interacts with KRIT1 (via N-terminal NPXY motif); the interaction induces the opening conformation of KRIT1 and KRIT1 and ITGB1 compete for the same binding site. Isoform 2 does not interact with ITGB1. Interacts with CDC42 (GTP- or GDP-bound form); the interaction is increased with the CDC42-membrane bound forms and prevents both CDC42 activation and cell spreading. Interacts (via C-terminal domain region) with NME2. Interacts with FERMT2 and RAC1. Phosphorylation at Thr-38 seems to enhance integrin alpha5beta1-mediated cell adhesion. The degree of phosphorylation is regulated by integrin-dependent cell-matrix interaction.

It localises to the nucleus. The protein resides in the cytoplasm. It is found in the cytoskeleton. Its subcellular location is the cell membrane. The protein localises to the cell projection. It localises to the lamellipodium. The protein resides in the ruffle. Its function is as follows. Key regulator of the integrin-mediated cell-matrix interaction signaling by binding to the ITGB1 cytoplasmic tail and preventing the activation of integrin alpha-5/beta-1 (heterodimer of ITGA5 and ITGB1) by talin or FERMT1. Plays a role in cell proliferation, differentiation, spreading, adhesion and migration in the context of mineralization and bone development and angiogenesis. Stimulates cellular proliferation in a fibronectin-dependent manner. Involved in the regulation of beta-1 integrin-containing focal adhesion (FA) site dynamics by controlling its assembly rate during cell adhesion; inhibits beta-1 integrin clustering within FA by directly competing with talin TLN1, and hence stimulates osteoblast spreading and migration in a fibronectin- and/or collagen-dependent manner. Acts as a guanine nucleotide dissociation inhibitor (GDI) by regulating Rho family GTPases during integrin-mediated cell matrix adhesion; reduces the level of active GTP-bound form of both CDC42 and RAC1 GTPases upon cell adhesion to fibronectin. Stimulates the release of active CDC42 from the membranes to maintain it in an inactive cytoplasmic pool. Participates in the translocation of the Rho-associated protein kinase ROCK1 to membrane ruffles at cell leading edges of the cell membrane, leading to an increase of myoblast cell migration on laminin. Plays a role in bone mineralization at a late stage of osteoblast differentiation; modulates the dynamic formation of focal adhesions into fibrillar adhesions, which are adhesive structures responsible for fibronectin deposition and fibrillogenesis. Plays a role in blood vessel development; acts as a negative regulator of angiogenesis by attenuating endothelial cell proliferation and migration, lumen formation and sprouting angiogenesis by promoting AKT phosphorylation and inhibiting ERK1/2 phosphorylation through activation of the Notch signaling pathway. Promotes transcriptional activity of the MYC promoter. This is Integrin beta-1-binding protein 1 (ITGB1BP1) from Bos taurus (Bovine).